Reading from the N-terminus, the 270-residue chain is MHFMTALRAAWQQRDSLLCVGLDPDPARFPAHLQGRPDAIFEFCAAIVDATADLVCSFKPQIAYFAARRAEDQLEALIDHIHAHHPGVPVILDAKRGDIGSTAEQYAVEAFERFKADAITVNPYMGRDSVDPYLAYPDKGVILLCRTSNPGGSDLQFLDVGGEKLYERVARLVAEDWNASGNCGLVVGATFPAEIARVRALTGEMPLLVPGIGAQGGDIEATVKAGRTAAGGGLMINSSRAILYAGKGEDFAAAARAAALQTRDAINAYR.

Lys95 functions as the Proton donor in the catalytic mechanism.

The protein belongs to the OMP decarboxylase family. Type 2 subfamily.

It carries out the reaction orotidine 5'-phosphate + H(+) = UMP + CO2. It participates in pyrimidine metabolism; UMP biosynthesis via de novo pathway; UMP from orotate: step 2/2. This Azoarcus sp. (strain BH72) protein is Orotidine 5'-phosphate decarboxylase.